Consider the following 473-residue polypeptide: Photosystem II CP43 reaction center protein (473 aa).

The propeptide occupies 1–14 (MKTLYSLRRFYPVE). Thr15 bears the N-acetylthreonine mark. At Thr15 the chain carries Phosphothreonine. The next 5 membrane-spanning stretches (helical) occupy residues 69–93 (LFEV…PHLA), 134–155 (LLGP…KDRN), 178–200 (KALY…RKIT), 255–275 (KPFA…LSYS), and 291–312 (WFNN…ASQA). Glu367 contacts [CaMn4O5] cluster. A helical transmembrane segment spans residues 447–471 (RARAAAAGFEKGIDRDFEPVLSMTP).

The protein belongs to the PsbB/PsbC family. PsbC subfamily. In terms of assembly, PSII is composed of 1 copy each of membrane proteins PsbA, PsbB, PsbC, PsbD, PsbE, PsbF, PsbH, PsbI, PsbJ, PsbK, PsbL, PsbM, PsbT, PsbX, PsbY, PsbZ, Psb30/Ycf12, at least 3 peripheral proteins of the oxygen-evolving complex and a large number of cofactors. It forms dimeric complexes. Binds multiple chlorophylls and provides some of the ligands for the Ca-4Mn-5O cluster of the oxygen-evolving complex. It may also provide a ligand for a Cl- that is required for oxygen evolution. PSII binds additional chlorophylls, carotenoids and specific lipids. serves as cofactor.

Its subcellular location is the plastid. It is found in the chloroplast thylakoid membrane. One of the components of the core complex of photosystem II (PSII). It binds chlorophyll and helps catalyze the primary light-induced photochemical processes of PSII. PSII is a light-driven water:plastoquinone oxidoreductase, using light energy to abstract electrons from H(2)O, generating O(2) and a proton gradient subsequently used for ATP formation. This is Photosystem II CP43 reaction center protein from Amborella trichopoda.